We begin with the raw amino-acid sequence, 250 residues long: MADS-box transcription factor 47 (250 aa).

The span at 1 to 10 shows a compositional bias: gly residues; that stretch reads MAGGGGGGGR. Disordered stretches follow at residues 1–20 and 196–250; these read MAGGGGGGGRGEGEGRAATG and SRME…FSSK. Basic and acidic residues predominate over residues 11–20; the sequence is GEGEGRAATG. The 61-residue stretch at 20–80 folds into the MADS-box domain; it reads GKRERIAIRR…GKLFQFASTS (61 aa). One can recognise a K-box domain in the interval 106 to 198; sequence QGEDSSTCAR…QLQVSRMSRM (93 aa). The segment covering 214–224 has biased composition (polar residues); sequence GQSSESVTNAS.

In terms of assembly, may interact with MADS18. In terms of tissue distribution, expressed in roots, shoots and developing panicles. Expressed in mature stems and leaves, flowering panicles, developing seeds, and mature seeds.

The protein resides in the nucleus. In terms of biological role, transcription factor that modulates expressions of multiple genes involved in cell signaling and gene transcription. Plays a negative regulatory role in brassinosteroid signaling. In Oryza sativa subsp. japonica (Rice), this protein is MADS-box transcription factor 47.